Consider the following 255-residue polypeptide: 1-(5-phosphoribosyl)-5-[(5-phosphoribosylamino)methylideneamino] imidazole-4-carboxamide isomerase (255 aa).

Asp-8 functions as the Proton acceptor in the catalytic mechanism. The active-site Proton donor is the Asp-129.

It belongs to the HisA/HisF family.

It localises to the cytoplasm. It carries out the reaction 1-(5-phospho-beta-D-ribosyl)-5-[(5-phospho-beta-D-ribosylamino)methylideneamino]imidazole-4-carboxamide = 5-[(5-phospho-1-deoxy-D-ribulos-1-ylimino)methylamino]-1-(5-phospho-beta-D-ribosyl)imidazole-4-carboxamide. It participates in amino-acid biosynthesis; L-histidine biosynthesis; L-histidine from 5-phospho-alpha-D-ribose 1-diphosphate: step 4/9. This is 1-(5-phosphoribosyl)-5-[(5-phosphoribosylamino)methylideneamino] imidazole-4-carboxamide isomerase from Prochlorococcus marinus (strain MIT 9211).